A 387-amino-acid chain; its full sequence is LL-diaminopimelate aminotransferase (387 aa).

The substrate site is built by Tyr14 and Gly39. Residues Tyr68, 102–103, Tyr127, Asn177, Tyr208, and 236–238 each bind pyridoxal 5'-phosphate; these read SK and SLS. 3 residues coordinate substrate: Lys103, Tyr127, and Asn177. Lys239 carries the post-translational modification N6-(pyridoxal phosphate)lysine. Arg247 contributes to the pyridoxal 5'-phosphate binding site. A substrate-binding site is contributed by Arg365.

It belongs to the class-I pyridoxal-phosphate-dependent aminotransferase family. LL-diaminopimelate aminotransferase subfamily. Homodimer. Requires pyridoxal 5'-phosphate as cofactor.

It carries out the reaction (2S,6S)-2,6-diaminopimelate + 2-oxoglutarate = (S)-2,3,4,5-tetrahydrodipicolinate + L-glutamate + H2O + H(+). It functions in the pathway amino-acid biosynthesis; L-lysine biosynthesis via DAP pathway; LL-2,6-diaminopimelate from (S)-tetrahydrodipicolinate (aminotransferase route): step 1/1. Functionally, involved in the synthesis of meso-diaminopimelate (m-DAP or DL-DAP), required for both lysine and peptidoglycan biosynthesis. Catalyzes the direct conversion of tetrahydrodipicolinate to LL-diaminopimelate. The polypeptide is LL-diaminopimelate aminotransferase (Aquifex aeolicus (strain VF5)).